The sequence spans 206 residues: Ras-related protein Ral-A (206 aa).

21–28 provides a ligand contact to GTP; sequence GSGGVGKS. Positions 43–51 match the Effector region motif; the sequence is YEPTKADSY. GTP-binding positions include 68–72 and 127–130; these read DTAGQ and NKSD. At serine 194 the chain carries Phosphoserine. Cysteine 203 carries the cysteine methyl ester modification. The S-geranylgeranyl cysteine moiety is linked to residue cysteine 203. Residues 204 to 206 constitute a propeptide, removed in mature form; that stretch reads CIL.

Belongs to the small GTPase superfamily. Ras family. Interacts (via effector domain) with RALBP1; during mitosis, recruits RALBP1 to the mitochondrion where it promotes DNM1L phosphorylation and mitochondrial fission. Interacts with EXOC2/Sec5 and EXOC8/Exo84; binding to EXOC2 and EXOC8 is mutually exclusive. Interacts with Clostridium exoenzyme C3. Interacts with RALGPS1. Interacts with LPAR1 and LPAR2. Interacts with GRK2 in response to LPAR1 activation. RALA and GRK2 binding to LPAR1 is mutually exclusive. Interacts with CDC42. In terms of processing, prenylation is essential for membrane localization. Post-translationally, phosphorylated. Phosphorylation at Ser-194 by AURKA/Aurora kinase A, during mitosis, induces RALA localization to the mitochondrion where it regulates mitochondrial fission.

Its subcellular location is the cell membrane. The protein resides in the cleavage furrow. It is found in the midbody. It localises to the midbody ring. The protein localises to the mitochondrion. The enzyme catalyses GTP + H2O = GDP + phosphate + H(+). Alternates between an inactive form bound to GDP and an active form bound to GTP. Activated by a guanine nucleotide-exchange factor (GEF) and inactivated by a GTPase-activating protein (GAP). Multifunctional GTPase involved in a variety of cellular processes including gene expression, cell migration, cell proliferation, oncogenic transformation and membrane trafficking. Accomplishes its multiple functions by interacting with distinct downstream effectors. Acts as a GTP sensor for GTP-dependent exocytosis of dense core vesicles. Key regulator of LPAR1 signaling and competes with GRK2 for binding to LPAR1 thus affecting the signaling properties of the receptor. Required for anchorage-independent proliferation of transformed cells. The RALA-exocyst complex regulates integrin-dependent membrane raft exocytosis and growth signaling. During mitosis, supports the stabilization and elongation of the intracellular bridge between dividing cells. Cooperates with EXOC2 to recruit other components of the exocyst to the early midbody. During mitosis, also controls mitochondrial fission by recruiting to the mitochondrion RALBP1, which mediates the phosphorylation and activation of DNM1L by the mitotic kinase cyclin B-CDK1. The sequence is that of Ras-related protein Ral-A (Rala) from Mus musculus (Mouse).